A 663-amino-acid chain; its full sequence is Dual specificity protein phosphatase 8 (663 aa).

In terms of domain architecture, Rhodanese spans 23 to 138 (GPGGPLVIDS…FSSCFPGLCE (116 aa)). In terms of domain architecture, Tyrosine-protein phosphatase spans 160-302 (GLTRILPHLY…LLEYERSLKL (143 aa)). Cys-246 (phosphocysteine intermediate) is an active-site residue. Disordered stretches follow at residues 313-367 (LGTP…STAP) and 404-624 (YAPS…FKRR). Low complexity-rich tracts occupy residues 334 to 353 (STSE…REGS), 427 to 448 (LDSP…PDSV), and 546 to 557 (SAGAPGPGNSSS). The segment covering 558–577 (SGGGGGGGGGGGGGGGGGGS) has biased composition (gly residues). Residues 578-600 (SSSNSSSSSSSSSSSSSSSSSSS) show a composition bias toward low complexity.

It belongs to the protein-tyrosine phosphatase family. Non-receptor class dual specificity subfamily. Monomer. In terms of tissue distribution, expressed predominantly in brain and lung.

Its subcellular location is the cytoplasm. The protein resides in the nucleus. The catalysed reaction is O-phospho-L-tyrosyl-[protein] + H2O = L-tyrosyl-[protein] + phosphate. It catalyses the reaction O-phospho-L-seryl-[protein] + H2O = L-seryl-[protein] + phosphate. It carries out the reaction O-phospho-L-threonyl-[protein] + H2O = L-threonyl-[protein] + phosphate. Its function is as follows. Has phosphatase activity with synthetic phosphatase substrates and negatively regulates mitogen-activated protein kinase activity, presumably by catalysing their dephosphorylation. Expected to display protein phosphatase activity toward phosphotyrosine, phosphoserine and phosphothreonine residues. This is Dual specificity protein phosphatase 8 (Dusp8) from Mus musculus (Mouse).